Consider the following 561-residue polypeptide: 2-succinyl-5-enolpyruvyl-6-hydroxy-3-cyclohexene-1-carboxylate synthase (561 aa).

The protein belongs to the TPP enzyme family. MenD subfamily. As to quaternary structure, homodimer. The cofactor is Mg(2+). It depends on Mn(2+) as a cofactor. Thiamine diphosphate is required as a cofactor.

The catalysed reaction is isochorismate + 2-oxoglutarate + H(+) = 5-enolpyruvoyl-6-hydroxy-2-succinyl-cyclohex-3-ene-1-carboxylate + CO2. It functions in the pathway quinol/quinone metabolism; 1,4-dihydroxy-2-naphthoate biosynthesis; 1,4-dihydroxy-2-naphthoate from chorismate: step 2/7. It participates in cofactor biosynthesis; phylloquinone biosynthesis. Its function is as follows. Catalyzes the thiamine diphosphate-dependent decarboxylation of 2-oxoglutarate and the subsequent addition of the resulting succinic semialdehyde-thiamine pyrophosphate anion to isochorismate to yield 2-succinyl-5-enolpyruvyl-6-hydroxy-3-cyclohexene-1-carboxylate (SEPHCHC). The sequence is that of 2-succinyl-5-enolpyruvyl-6-hydroxy-3-cyclohexene-1-carboxylate synthase from Synechococcus sp. (strain CC9605).